Here is a 261-residue protein sequence, read N- to C-terminus: Zinc import ATP-binding protein ZnuC (261 aa).

Positions 5 to 220 constitute an ABC transporter domain; sequence ISLKALSVTF…PSYIALFGSA (216 aa). Residue 37 to 44 coordinates ATP; the sequence is GPNGAGKS. A disordered region spans residues 236–261; the sequence is HHDLAGQPVSGDATQCNHHHHGHHHD. The span at 252-261 shows a compositional bias: basic residues; sequence NHHHHGHHHD.

It belongs to the ABC transporter superfamily. Zinc importer (TC 3.A.1.15.5) family. In terms of assembly, the complex is composed of two ATP-binding proteins (ZnuC), two transmembrane proteins (ZnuB) and a solute-binding protein (ZnuA).

It is found in the cell inner membrane. It catalyses the reaction Zn(2+)(out) + ATP(in) + H2O(in) = Zn(2+)(in) + ADP(in) + phosphate(in) + H(+)(in). Functionally, part of the ABC transporter complex ZnuABC involved in zinc import. Responsible for energy coupling to the transport system. The chain is Zinc import ATP-binding protein ZnuC from Vibrio vulnificus (strain CMCP6).